The following is a 197-amino-acid chain: Small ribosomal subunit protein uS4 (197 aa).

An S4 RNA-binding domain is found at 94–158 (RRLDNVIYRF…LKKYLYDYKN (65 aa)).

It belongs to the universal ribosomal protein uS4 family. As to quaternary structure, part of the 30S ribosomal subunit. Contacts protein S5. The interaction surface between S4 and S5 is involved in control of translational fidelity.

In terms of biological role, one of the primary rRNA binding proteins, it binds directly to 16S rRNA where it nucleates assembly of the body of the 30S subunit. Functionally, with S5 and S12 plays an important role in translational accuracy. This is Small ribosomal subunit protein uS4 (rpsD) from Carsonella ruddii (strain PV).